The following is a 370-amino-acid chain: G-protein coupled receptor homolog K2 (370 aa).

Residues 1 to 61 lie on the Extracellular side of the membrane; sequence MTSPTNSTML…CTFLEDTKYH (61 aa). Asn6 and Asn51 each carry an N-linked (GlcNAc...) asparagine; by host glycan. Residues 62 to 82 traverse the membrane as a helical segment; that stretch reads IIVIHIILFLLGSIGNIFVVS. At 83 to 94 the chain is on the cytoplasmic side; sequence LIAFKRNKSITD. The chain crosses the membrane as a helical span at residues 95–115; that stretch reads IYILNLSMSDCIFVFQIPFIV. Topologically, residues 116 to 131 are extracellular; sequence YSKLDQWIFGNILCKI. A helical transmembrane segment spans residues 132–152; it reads MSVLYYVGFFSNMFIITLMSI. The Cytoplasmic portion of the chain corresponds to 153–171; it reads DRYFAIVHPIKRQPYRTKR. A helical transmembrane segment spans residues 172 to 192; that stretch reads IGILMCCSAWLLSLILSSPVS. The Extracellular segment spans residues 193 to 223; the sequence is KLYENIPHMSKDIYQCTLTNENDSIIAFIKR. A helical membrane pass occupies residues 224–244; the sequence is LMQIEITILGFLIPIIIFVYC. Residues 245 to 265 are Cytoplasmic-facing; it reads YYRIFTTVVRLRNRRKYKSIK. Residues 266–286 form a helical membrane-spanning segment; that stretch reads IVLMIVVCSLICWIPLYIVLM. The Extracellular portion of the chain corresponds to 287–300; the sequence is IATIVSLYTSNIFR. Residues 301 to 321 form a helical membrane-spanning segment; that stretch reads HLCLYLNLAYAITFSETISLA. Residues 322–370 lie on the Cytoplasmic side of the membrane; it reads RCCINPIIYTLIGEHVRSRISSICSCIYRDNRIRKKLFSRKSSSSSNII.

It belongs to the G-protein coupled receptor 1 family.

The protein localises to the host cell membrane. Putative chemokine receptor. This is G-protein coupled receptor homolog K2 from Sus scrofa (Pig).